A 452-amino-acid polypeptide reads, in one-letter code: Methionine aminopeptidase 2 (452 aa).

A disordered region spans residues 1–96 (MAVQALPEIN…VPLSTLFPNN (96 aa)). A compositionally biased stretch (low complexity) spans 18–35 (GAANAAAKGQAAQGTAGN). Residues 36-53 (DDAENDESDEDKEDEQEV) show a composition bias toward acidic residues. Over residues 62-77 (GKKKKKKTKKKKKKGT) the composition is skewed to basic residues. A substrate-binding site is contributed by His-202. Residues Asp-222, Asp-233, and His-302 each coordinate a divalent metal cation. His-310 is a binding site for substrate. The a divalent metal cation site is built by Glu-338 and Glu-433.

The protein belongs to the peptidase M24A family. Methionine aminopeptidase eukaryotic type 2 subfamily. It depends on Co(2+) as a cofactor. Zn(2+) serves as cofactor. Requires Mn(2+) as cofactor. The cofactor is Fe(2+).

Its subcellular location is the cytoplasm. It carries out the reaction Release of N-terminal amino acids, preferentially methionine, from peptides and arylamides.. Functionally, cotranslationally removes the N-terminal methionine from nascent proteins. The N-terminal methionine is often cleaved when the second residue in the primary sequence is small and uncharged (Met-Ala-, Cys, Gly, Pro, Ser, Thr, or Val). This chain is Methionine aminopeptidase 2, found in Coccidioides posadasii (strain C735) (Valley fever fungus).